The primary structure comprises 510 residues: P-(S)-hydroxymandelonitrile lyase (510 aa).

An N-terminal signal peptide occupies residues 1–34 (MAVFISSSGSPGRATATTTTTTTLLLAVLAAAAA). Position 116–118 (116–118 (NGG)) interacts with substrate. Disulfide bonds link C121–C377, C277–C289, and C313–C344. Residue N172 is glycosylated (N-linked (GlcNAc...) asparagine). Residue 212–213 (ES) coordinates substrate. S213 is an active-site residue. N365 is a glycosylation site (N-linked (GlcNAc...) asparagine). Residues D414 and H469 contribute to the active site. 465-469 (SGAGH) contacts substrate.

Belongs to the peptidase S10 family. In terms of assembly, heterotetramer of two A and two B chains. The A and B chains are linked by a disulfide bond. Post-translationally, the N-terminus of chain A is blocked. In terms of tissue distribution, primary leaves of seedlings.

It carries out the reaction (S)-4-hydroxymandelonitrile = 4-hydroxybenzaldehyde + hydrogen cyanide. Involved in cyanogenesis, the release of HCN from injured tissues. Is involved in the catabolism of the cyanogenic glycoside dhurrin. This Sorghum bicolor (Sorghum) protein is P-(S)-hydroxymandelonitrile lyase.